We begin with the raw amino-acid sequence, 121 residues long: Large ribosomal subunit protein uL18 (121 aa).

It belongs to the universal ribosomal protein uL18 family. As to quaternary structure, part of the 50S ribosomal subunit; part of the 5S rRNA/L5/L18/L25 subcomplex. Contacts the 5S and 23S rRNAs.

This is one of the proteins that bind and probably mediate the attachment of the 5S RNA into the large ribosomal subunit, where it forms part of the central protuberance. This Ureaplasma urealyticum serovar 10 (strain ATCC 33699 / Western) protein is Large ribosomal subunit protein uL18.